A 310-amino-acid polypeptide reads, in one-letter code: UPF0324 membrane protein GSU2818 (310 aa).

9 consecutive transmembrane segments (helical) span residues 11–33 (FTIL…VMGI), 53–72 (MLLQ…GEVI), 79–97 (IWYS…YGLG), 107–129 (SALI…APVL), 136–158 (TAVA…PLVG), 193–215 (ALAI…VMAA), 227–244 (IPLF…RTLL), 254–273 (LAGV…GAGL), and 286–308 (LVQA…KLPW).

Belongs to the UPF0324 family.

It localises to the cell membrane. This is UPF0324 membrane protein GSU2818 from Geobacter sulfurreducens (strain ATCC 51573 / DSM 12127 / PCA).